The chain runs to 475 residues: uncharacterized protein (475 aa).

Residues 185–244 (EISVSAISEQLASLMERVDKLEKMNAALEEENKQLKKEREATIKSVKKEAKKIKQEKPQI) are a coiled coil.

This is an uncharacterized protein from Nora virus.